A 416-amino-acid polypeptide reads, in one-letter code: RNA polymerase sigma factor SigA (416 aa).

The sigma-70 factor domain-2 stretch occupies residues M184–T254. An Interaction with polymerase core subunit RpoC motif is present at residues D208–Q211. The segment at E263–E338 is sigma-70 factor domain-3. The sigma-70 factor domain-4 stretch occupies residues V351–H404. Residues L377–A396 constitute a DNA-binding region (H-T-H motif).

It belongs to the sigma-70 factor family. RpoD/SigA subfamily. In terms of assembly, interacts transiently with the RNA polymerase catalytic core.

It is found in the cytoplasm. Its function is as follows. Sigma factors are initiation factors that promote the attachment of RNA polymerase to specific initiation sites and are then released. This sigma factor is the primary sigma factor during exponential growth. In Microcystis aeruginosa, this protein is RNA polymerase sigma factor SigA.